We begin with the raw amino-acid sequence, 412 residues long: Multidrug resistance protein MdtG (412 aa).

11 helical membrane passes run 19-39, 56-76, 90-110, 113-133, 144-164, 171-191, 222-242, 254-274, 288-308, 317-337, and 376-396; these read LGCF…PLYV, LVFS…GGLA, LGMS…QFLL, ALLG…ATQI, TLST…GFLA, TVFF…LFLI, LFVT…ILTL, IAFI…MSAP, ILIV…FVQT, FLLG…LVYN, and AVFL…TLSL.

The protein belongs to the major facilitator superfamily. DHA1 family. MdtG (TC 2.A.1.2.20) subfamily.

The protein resides in the cell inner membrane. The chain is Multidrug resistance protein MdtG from Klebsiella pneumoniae (strain 342).